Reading from the N-terminus, the 638-residue chain is Polypeptide N-acetylgalactosaminyltransferase 15 (638 aa).

The Cytoplasmic portion of the chain corresponds to 1–12 (MLPRKRPRSGRS). The chain crosses the membrane as a helical; Signal-anchor for type II membrane protein span at residues 13–35 (RLQFLLLFLTLGCVLMMVILLHP). The Lumenal portion of the chain corresponds to 36 to 638 (PPPTLHQAVT…FDQIHPVDER (603 aa)). The interval 134 to 157 (KDWRTEEDGEESEEVLTPLGPDSD) is disordered. 5 disulfide bridges follow: Cys-181–Cys-411, Cys-402–Cys-481, Cys-516–Cys-535, Cys-561–Cys-574, and Cys-602–Cys-619. The tract at residues 190–299 (LPTASVILCF…PGWLEPLLSR (110 aa)) is catalytic subdomain A. Substrate-binding residues include Asp-231 and Arg-260. Residues Asp-283, His-285, and His-416 each contribute to the Mn(2+) site. Residues 357 to 419 (PVRSPVVPRE…PCSRVGHIYR (63 aa)) are catalytic subdomain B. Arg-419 serves as a coordination point for substrate. One can recognise a Ricin B-type lectin domain in the interval 503–630 (RFSGKLHNTG…GKTSQLWRFD (128 aa)). An N-linked (GlcNAc...) asparagine glycan is attached at Asn-573.

This sequence belongs to the glycosyltransferase 2 family. GalNAc-T subfamily. Mn(2+) is required as a cofactor. Specifically expressed in testis.

It localises to the golgi apparatus membrane. The enzyme catalyses L-seryl-[protein] + UDP-N-acetyl-alpha-D-galactosamine = a 3-O-[N-acetyl-alpha-D-galactosaminyl]-L-seryl-[protein] + UDP + H(+). It carries out the reaction L-threonyl-[protein] + UDP-N-acetyl-alpha-D-galactosamine = a 3-O-[N-acetyl-alpha-D-galactosaminyl]-L-threonyl-[protein] + UDP + H(+). It functions in the pathway protein modification; protein glycosylation. Its function is as follows. Catalyzes the initial reaction in O-linked oligosaccharide biosynthesis, the transfer of an N-acetyl-D-galactosamine residue to a serine or threonine residue on the protein receptor. Although it displays a much weaker activity toward all substrates tested compared to GALNT2, it is able to transfer up to seven GalNAc residues to the Muc5AC peptide, suggesting that it can fill vicinal Thr/Ser residues in cooperation with other GALNT proteins. Prefers Muc1a as substrate. The polypeptide is Polypeptide N-acetylgalactosaminyltransferase 15 (Galnt15) (Mus musculus (Mouse)).